The primary structure comprises 188 residues: Glandular kallikrein-3, submandibular (188 aa).

Residues 1 to 185 (NYHVLLGQNN…FTSWIKEVMK (185 aa)) enclose the Peptidase S1 domain. Residues N10 and N36 are each glycosylated (N-linked (GlcNAc...) asparagine). D47 serves as the catalytic Charge relay system. 3 disulfide bridges follow: C79–C146, C111–C125, and C136–C161. The active-site Charge relay system is S140.

Belongs to the peptidase S1 family. Kallikrein subfamily.

It carries out the reaction Preferential cleavage of Arg-|-Xaa bonds in small molecule substrates. Highly selective action to release kallidin (lysyl-bradykinin) from kininogen involves hydrolysis of Met-|-Xaa or Leu-|-Xaa.. Functionally, glandular kallikreins cleave Met-Lys and Arg-Ser bonds in kininogen to release Lys-bradykinin. This Rattus norvegicus (Rat) protein is Glandular kallikrein-3, submandibular (Klk3).